We begin with the raw amino-acid sequence, 447 residues long: Asparagine--tRNA ligase (447 aa).

The protein belongs to the class-II aminoacyl-tRNA synthetase family. Homodimer.

Its subcellular location is the cytoplasm. It carries out the reaction tRNA(Asn) + L-asparagine + ATP = L-asparaginyl-tRNA(Asn) + AMP + diphosphate + H(+). This chain is Asparagine--tRNA ligase, found in Lactococcus lactis subsp. cremoris (strain MG1363).